The sequence spans 1213 residues: DNA-directed RNA polymerase subunit beta' (1213 aa).

Zn(2+)-binding residues include C60, C62, C75, and C78. D450, D452, and D454 together coordinate Mg(2+). C819, C893, C900, and C903 together coordinate Zn(2+).

It belongs to the RNA polymerase beta' chain family. The RNAP catalytic core consists of 2 alpha, 1 beta, 1 beta' and 1 omega subunit. When a sigma factor is associated with the core the holoenzyme is formed, which can initiate transcription. Requires Mg(2+) as cofactor. It depends on Zn(2+) as a cofactor.

The catalysed reaction is RNA(n) + a ribonucleoside 5'-triphosphate = RNA(n+1) + diphosphate. Its function is as follows. DNA-dependent RNA polymerase catalyzes the transcription of DNA into RNA using the four ribonucleoside triphosphates as substrates. The protein is DNA-directed RNA polymerase subunit beta' of Streptococcus pyogenes serotype M1.